An 807-amino-acid chain; its full sequence is Glycerol-3-phosphate acyltransferase (807 aa).

The HXXXXD motif motif lies at 305-310; that stretch reads CHRSHM.

It belongs to the GPAT/DAPAT family.

It is found in the cell inner membrane. The enzyme catalyses sn-glycerol 3-phosphate + an acyl-CoA = a 1-acyl-sn-glycero-3-phosphate + CoA. Its pathway is phospholipid metabolism; CDP-diacylglycerol biosynthesis; CDP-diacylglycerol from sn-glycerol 3-phosphate: step 1/3. The protein is Glycerol-3-phosphate acyltransferase of Klebsiella pneumoniae subsp. pneumoniae (strain ATCC 700721 / MGH 78578).